The sequence spans 146 residues: Large ribosomal subunit protein uL15 (146 aa).

Residues 1 to 51 form a disordered region; that stretch reads MQLNTIKPAEGSKKNRRHVGRGIGSGLGKTAGRGHKGQKSRSGGFHKVGFE. Residues 21 to 31 show a composition bias toward gly residues; the sequence is RGIGSGLGKTA.

It belongs to the universal ribosomal protein uL15 family. Part of the 50S ribosomal subunit.

Functionally, binds to the 23S rRNA. In Polynucleobacter necessarius subsp. necessarius (strain STIR1), this protein is Large ribosomal subunit protein uL15.